Consider the following 507-residue polypeptide: MATHQQTQPPSDFPALADENSQIPEATKPANEVQQATIAQDPPTSVFKNSEPIREDQIQNAIKFLSHPRVRGSPVIHRRSFLERKGLTKEEIDEAFRRVPDPPPSSQTTVTTSQDGQQAVSTVQPQAMQPVVAAPAPLIVTPQAAFLSRFRWYHAILAVGVLAASGAGTAVFIKRSLIPRFKSWVQRIMLEEETDPLKKADAKPSLAEEAVAAAKAASAAASDVARVSQEMMITKNEERKYFEDLTHLLGVQVQEMKSLSNNIRKLEGQSNNIPKIYSADQEVYNGSVTTARKPYTNGSNVDYDTRSARSASPPAAPADSSAPPHPKSYMDIMSMIQRGEKPSNIREINDMPPNPNQPLSDPRIAPKSKPWDYGQAPQDESSNGQWWQQKNPRSTDFGYETTTAARFTANQNETSTMEPAAFQRQRSWVPPQPPPVAMAEAVEAIRRPKPQAKIDQEAAASDGQSGVSDELQKITKFSESGGDGSGGIKIAEIQEETEQQHISQEGN.

Composition is skewed to polar residues over residues 1–10 (MATHQQTQPP) and 32–48 (EVQQ…SVFK). The segment at 1-52 (MATHQQTQPPSDFPALADENSQIPEATKPANEVQQATIAQDPPTSVFKNSEP) is disordered. The Peroxisomal portion of the chain corresponds to 1 to 152 (MATHQQTQPP…QAAFLSRFRW (152 aa)). Involved in interaction with PEX5 stretches follow at residues 58-65 (IQNAIKFL) and 78-97 (RRSF…EAFR). Residues 153–173 (YHAILAVGVLAASGAGTAVFI) traverse the membrane as a helical segment. Over 174–507 (KRSLIPRFKS…EQQHISQEGN (334 aa)) the chain is Cytoplasmic. Residues 288–302 (VTTARKPYTNGSNVD) are compositionally biased toward polar residues. Disordered regions lie at residues 288–329 (VTTA…PKSY), 344–394 (NIRE…NPRS), 409–435 (ANQN…QPPP), and 448–507 (PKPQ…QEGN). Positions 308 to 322 (ARSASPPAAPADSSA) are enriched in low complexity. Residues 378–394 (QDESSNGQWWQQKNPRS) are compositionally biased toward polar residues.

It belongs to the peroxin-14 family. In terms of assembly, interacts with PEX13; forming the PEX13-PEX14 docking complex. Interacts with PEX5 (via WxxxF/Y motifs). Expressed in flowers, siliques, leaves and roots.

It localises to the peroxisome membrane. Component of the PEX13-PEX14 docking complex, a translocon channel that specifically mediates the import of peroxisomal cargo proteins bound to PEX5 receptor. The PEX13-PEX14 docking complex forms a large import pore which can be opened to a diameter of about 9 nm. Mechanistically, PEX5 receptor along with cargo proteins associates with the PEX14 subunit of the PEX13-PEX14 docking complex in the cytosol, leading to the insertion of the receptor into the organelle membrane with the concomitant translocation of the cargo into the peroxisome matrix. The sequence is that of Peroxisomal membrane protein PEX14 from Arabidopsis thaliana (Mouse-ear cress).